The chain runs to 240 residues: Uridylate kinase (240 aa).

13–16 provides a ligand contact to ATP; the sequence is KFSG. G55 lines the UMP pocket. G56 and R60 together coordinate ATP. UMP contacts are provided by residues D76 and 137–144; that span reads TGNPFFTT. Residues T164, Y170, and D173 each coordinate ATP.

The protein belongs to the UMP kinase family. In terms of assembly, homohexamer.

It localises to the cytoplasm. The catalysed reaction is UMP + ATP = UDP + ADP. The protein operates within pyrimidine metabolism; CTP biosynthesis via de novo pathway; UDP from UMP (UMPK route): step 1/1. Inhibited by UTP. Catalyzes the reversible phosphorylation of UMP to UDP. The chain is Uridylate kinase from Helicobacter acinonychis (strain Sheeba).